Consider the following 357-residue polypeptide: N-acetyl-gamma-glutamyl-phosphate reductase (357 aa).

The active site involves C160.

It belongs to the NAGSA dehydrogenase family. Type 1 subfamily.

The protein localises to the cytoplasm. It carries out the reaction N-acetyl-L-glutamate 5-semialdehyde + phosphate + NADP(+) = N-acetyl-L-glutamyl 5-phosphate + NADPH + H(+). The protein operates within amino-acid biosynthesis; L-arginine biosynthesis; N(2)-acetyl-L-ornithine from L-glutamate: step 3/4. Its function is as follows. Catalyzes the NADPH-dependent reduction of N-acetyl-5-glutamyl phosphate to yield N-acetyl-L-glutamate 5-semialdehyde. In Synechococcus sp. (strain CC9605), this protein is N-acetyl-gamma-glutamyl-phosphate reductase.